We begin with the raw amino-acid sequence, 438 residues long: Adenylosuccinate synthetase (438 aa).

GTP-binding positions include Gly-13 to Lys-19 and Gly-41 to Thr-43. The Proton acceptor role is filled by Asp-14. Positions 14 and 41 each coordinate Mg(2+). IMP is bound by residues Asp-14–Lys-17, Asn-39–His-42, Thr-130, Arg-144, Gln-225, Thr-240, and Arg-310. The active-site Proton donor is His-42. Position 306 to 312 (Ala-306 to Arg-312) interacts with substrate. Residues Arg-312, Lys-338–Asp-340, and Ser-421–Gly-423 contribute to the GTP site.

The protein belongs to the adenylosuccinate synthetase family. In terms of assembly, homodimer. Mg(2+) is required as a cofactor.

Its subcellular location is the cytoplasm. The enzyme catalyses IMP + L-aspartate + GTP = N(6)-(1,2-dicarboxyethyl)-AMP + GDP + phosphate + 2 H(+). Its pathway is purine metabolism; AMP biosynthesis via de novo pathway; AMP from IMP: step 1/2. Functionally, plays an important role in the de novo pathway of purine nucleotide biosynthesis. Catalyzes the first committed step in the biosynthesis of AMP from IMP. This is Adenylosuccinate synthetase from Aliivibrio fischeri (strain ATCC 700601 / ES114) (Vibrio fischeri).